A 348-amino-acid polypeptide reads, in one-letter code: Probable dual-specificity RNA methyltransferase RlmN (348 aa).

Glu93 serves as the catalytic Proton acceptor. Residues 99–333 (TEKRLTACLS…VSFRKSRGLD (235 aa)) enclose the Radical SAM core domain. Cys106 and Cys338 form a disulfide bridge. 3 residues coordinate [4Fe-4S] cluster: Cys113, Cys117, and Cys120. S-adenosyl-L-methionine-binding positions include 160–161 (GE), Ser190, 219–221 (SLH), and Asn295. Cys338 serves as the catalytic S-methylcysteine intermediate.

It belongs to the radical SAM superfamily. RlmN family. The cofactor is [4Fe-4S] cluster.

Its subcellular location is the cytoplasm. The enzyme catalyses adenosine(2503) in 23S rRNA + 2 reduced [2Fe-2S]-[ferredoxin] + 2 S-adenosyl-L-methionine = 2-methyladenosine(2503) in 23S rRNA + 5'-deoxyadenosine + L-methionine + 2 oxidized [2Fe-2S]-[ferredoxin] + S-adenosyl-L-homocysteine. It carries out the reaction adenosine(37) in tRNA + 2 reduced [2Fe-2S]-[ferredoxin] + 2 S-adenosyl-L-methionine = 2-methyladenosine(37) in tRNA + 5'-deoxyadenosine + L-methionine + 2 oxidized [2Fe-2S]-[ferredoxin] + S-adenosyl-L-homocysteine. In terms of biological role, specifically methylates position 2 of adenine 2503 in 23S rRNA and position 2 of adenine 37 in tRNAs. The polypeptide is Probable dual-specificity RNA methyltransferase RlmN (Prochlorococcus marinus (strain MIT 9312)).